Here is a 986-residue protein sequence, read N- to C-terminus: Replication factor C subunit 1 (986 aa).

The segment at 1–95 is disordered; the sequence is MQRGIDSFFK…ALSKLKRHVD (95 aa). Residues S18, S28, S40, S41, S48, and S58 each carry the phosphoserine modification. T60 bears the Phosphothreonine mark. A phosphoserine mark is found at S62 and S63. The residue at position 71 (T71) is a Phosphothreonine. Phosphoserine occurs at positions 128, 137, 149, 154, 156, 164, and 194. The segment covering 136–147 has biased composition (basic and acidic residues); that stretch reads ESIKEAAPEKKV. Disordered stretches follow at residues 136-203 and 317-388; these read ESIK…ERHE and KQVK…NDVP. At T197 the chain carries Phosphothreonine. A BRCT domain is found at 232 to 322; it reads GSPDCLSGLT…SGIAKQVKEE (91 aa). Composition is skewed to basic and acidic residues over residues 317–364 and 370–385; these read KQVK…EKHD and VKEE…DKLN. An ATP-binding site is contributed by 487–494; it reads GPPGIGKT. Positions 913–986 are disordered; it reads SEAAGADDDY…ASKSKAKAKK (74 aa). The span at 917-932 shows a compositional bias: acidic residues; sequence GADDDYLDEGPGEEDG. Phosphoserine occurs at positions 938 and 939. A Nuclear localization signal motif is present at residues 955–959; the sequence is KAKKR. The span at 962 to 979 shows a compositional bias: low complexity; the sequence is TSKASGGSKKATSSTASK.

It belongs to the activator 1 large subunit family. As to quaternary structure, interacts with C-terminus of PCNA.

The protein resides in the nucleus. Functionally, the elongation of primed DNA templates by DNA polymerase delta and epsilon requires the action of the accessory proteins proliferating cell nuclear antigen (PCNA) and activator 1. This subunit binds to the primer-template junction. The polypeptide is Replication factor C subunit 1 (Gnf1) (Drosophila melanogaster (Fruit fly)).